Here is an 82-residue protein sequence, read N- to C-terminus: Small ribosomal subunit protein bS16 (82 aa).

The protein belongs to the bacterial ribosomal protein bS16 family.

The protein is Small ribosomal subunit protein bS16 of Rippkaea orientalis (strain PCC 8801 / RF-1) (Cyanothece sp. (strain PCC 8801)).